Consider the following 427-residue polypeptide: Inward rectifier potassium channel 2 (427 aa).

Residues 1–81 (MGSVRTNRYS…IFTTCVDIRW (81 aa)) lie on the Cytoplasmic side of the membrane. Cysteine 76 is modified (S-nitrosocysteine). The helical transmembrane segment at 82–106 (RWMLVIFCLAFVLSWLFFGCVFWLI) threads the bilayer. Topologically, residues 107–128 (ALLHGDLDASKESKACVSEVNS) are extracellular. The segment at residues 129–140 (FTAAFLFSIETQ) is an intramembrane region (helical; Pore-forming). An intramembrane region (pore-forming) is located at residues 141–147 (TTIGYGF). The Selectivity filter motif lies at 142–147 (TIGYGF). Over 148–156 (RCVTDECPI) the chain is Extracellular. A helical transmembrane segment spans residues 157–178 (AVFMVVFQSIVGCIIDAFIIGA). Residues 179–427 (VMAKMAKPKK…PRPLRRESEI (249 aa)) lie on the Cytoplasmic side of the membrane. Residues 181 to 208 (AKMAKPKKRNETLVFSHNAVIAMRDGKL) are polyphosphoinositide (PIP2)-binding. Residues 384–427 (SKEEDDSENGVPESTSTDTPPDIDLHNQASVPLEPRPLRRESEI) are disordered. The PDZ-binding motif lies at 425–427 (SEI).

Belongs to the inward rectifier-type potassium channel (TC 1.A.2.1) family. KCNJ2 subfamily. As to quaternary structure, homotetramer. Homomultimeric and heteromultimeric association with KCNJ4/Kir2.3. Can form heteromeric channels with Kir2.6/KCNJ18. Associates, via its PDZ-recognition domain, with a complex containing LIN7A, LIN7B, LIN7C, DLG1, CASK and APBA1. Post-translationally, S-nitrosylation increases the open probability and inward rectifying currents.

Its subcellular location is the cell membrane. It localises to the sarcolemma. It is found in the T-tubule. The catalysed reaction is K(+)(in) = K(+)(out). With respect to regulation, activated by phosphatidylinositol 4,5 biphosphate (PtdIns(4,5)P2). In terms of biological role, inward rectifier potassium channels are characterized by a greater tendency to allow potassium to flow into the cell rather than out of it. Their voltage dependence is regulated by the concentration of extracellular potassium; as external potassium is raised, the voltage range of the channel opening shifts to more positive voltages. The inward rectification is mainly due to the blockage of outward current by internal magnesium. Blocked by external barium or cesium. Probably participates in establishing action potential waveform and excitability of neuronal and muscle tissues. This is Inward rectifier potassium channel 2 (KCNJ2) from Cavia porcellus (Guinea pig).